The primary structure comprises 805 residues: Acetyl-CoA decarbonylase/synthase complex subunit alpha 3 (805 aa).

6 residues coordinate [4Fe-4S] cluster: C72, C75, C76, C78, C83, and C93. Residue H116 coordinates CO. Residues H249, C277, and C322 each coordinate [Ni-4Fe-4S] cluster. 4Fe-4S ferredoxin-type domains lie at 407–435 and 445–474; these read EEFK…IPEA and EYLE…LNVL. C416, C419, C422, C426, C454, C457, C460, and C464 together coordinate [4Fe-4S] cluster. C522, C551, and C586 together coordinate [Ni-4Fe-4S] cluster.

It belongs to the Ni-containing carbon monoxide dehydrogenase family. As to quaternary structure, heterotetramer of two alpha and two epsilon subunits. The ACDS complex is made up of alpha, epsilon, beta, gamma and delta subunits with a probable stoichiometry of (alpha(2)epsilon(2))(4)-beta(8)-(gamma(1)delta(1))(8). It depends on [4Fe-4S] cluster as a cofactor. Requires [Ni-4Fe-4S] cluster as cofactor.

The enzyme catalyses CO + 2 oxidized [2Fe-2S]-[ferredoxin] + H2O = 2 reduced [2Fe-2S]-[ferredoxin] + CO2 + 2 H(+). Its pathway is one-carbon metabolism; methanogenesis from acetate. Its function is as follows. Part of the ACDS complex that catalyzes the reversible cleavage of acetyl-CoA, allowing growth on acetate as sole source of carbon and energy. The alpha-epsilon subcomponent functions as a carbon monoxide dehydrogenase. In Methanosarcina acetivorans (strain ATCC 35395 / DSM 2834 / JCM 12185 / C2A), this protein is Acetyl-CoA decarbonylase/synthase complex subunit alpha 3.